The chain runs to 261 residues: Cytochrome c oxidase subunit 3 (261 aa).

Residues 1 to 15 (MTHQTHAYHMVNPSP) lie on the Mitochondrial matrix side of the membrane. The chain crosses the membrane as a helical span at residues 16-34 (WPLTGALSALLMTSGLIMW). Topologically, residues 35–40 (FHFNST) are mitochondrial intermembrane. The helical transmembrane segment at 41-66 (ALLTLGLTTNMLTMYQWWRDVIREST) threads the bilayer. At 67–72 (FQGHHT) the chain is on the mitochondrial matrix side. A helical transmembrane segment spans residues 73–105 (PAVQKGLRYGMILFIISEVLFFTGFFWAFYHSS). Residues 106–128 (LAPTPELGGCWPPTGIHPLNPLE) are Mitochondrial intermembrane-facing. Residues 129–152 (VPLLNTSVLLASGVSITWAHHSLM) traverse the membrane as a helical segment. Residues 153–155 (EGN) are Mitochondrial matrix-facing. The helical transmembrane segment at 156–183 (RYHMLQALFITIALGVYFTLLQASEYYE) threads the bilayer. The Mitochondrial intermembrane portion of the chain corresponds to 184–190 (APFTISD). Residues 191–223 (GVYGSTFFVATGFHGLHVIIGSTFLIVCFFRQL) traverse the membrane as a helical segment. At 224-232 (KFHFTSSHH) the chain is on the mitochondrial matrix side. The helical transmembrane segment at 233 to 256 (FGFEAAAWYWHFVDVVWLFLYMSI) threads the bilayer. The Mitochondrial intermembrane portion of the chain corresponds to 257-261 (YWWGS).

This sequence belongs to the cytochrome c oxidase subunit 3 family. Component of the cytochrome c oxidase (complex IV, CIV), a multisubunit enzyme composed of 14 subunits. The complex is composed of a catalytic core of 3 subunits MT-CO1, MT-CO2 and MT-CO3, encoded in the mitochondrial DNA, and 11 supernumerary subunits COX4I, COX5A, COX5B, COX6A, COX6B, COX6C, COX7A, COX7B, COX7C, COX8 and NDUFA4, which are encoded in the nuclear genome. The complex exists as a monomer or a dimer and forms supercomplexes (SCs) in the inner mitochondrial membrane with NADH-ubiquinone oxidoreductase (complex I, CI) and ubiquinol-cytochrome c oxidoreductase (cytochrome b-c1 complex, complex III, CIII), resulting in different assemblies (supercomplex SCI(1)III(2)IV(1) and megacomplex MCI(2)III(2)IV(2)).

It localises to the mitochondrion inner membrane. The enzyme catalyses 4 Fe(II)-[cytochrome c] + O2 + 8 H(+)(in) = 4 Fe(III)-[cytochrome c] + 2 H2O + 4 H(+)(out). Component of the cytochrome c oxidase, the last enzyme in the mitochondrial electron transport chain which drives oxidative phosphorylation. The respiratory chain contains 3 multisubunit complexes succinate dehydrogenase (complex II, CII), ubiquinol-cytochrome c oxidoreductase (cytochrome b-c1 complex, complex III, CIII) and cytochrome c oxidase (complex IV, CIV), that cooperate to transfer electrons derived from NADH and succinate to molecular oxygen, creating an electrochemical gradient over the inner membrane that drives transmembrane transport and the ATP synthase. Cytochrome c oxidase is the component of the respiratory chain that catalyzes the reduction of oxygen to water. Electrons originating from reduced cytochrome c in the intermembrane space (IMS) are transferred via the dinuclear copper A center (CU(A)) of subunit 2 and heme A of subunit 1 to the active site in subunit 1, a binuclear center (BNC) formed by heme A3 and copper B (CU(B)). The BNC reduces molecular oxygen to 2 water molecules using 4 electrons from cytochrome c in the IMS and 4 protons from the mitochondrial matrix. This is Cytochrome c oxidase subunit 3 (MT-CO3) from Ovis aries (Sheep).